Here is a 511-residue protein sequence, read N- to C-terminus: Cobyric acid synthase (511 aa).

A GATase cobBQ-type domain is found at 251 to 443 (LLDIAIICLP…IHGIFDNDVF (193 aa)). Catalysis depends on cysteine 332, which acts as the Nucleophile. Histidine 435 is an active-site residue.

The protein belongs to the CobB/CobQ family. CobQ subfamily.

The protein operates within cofactor biosynthesis; adenosylcobalamin biosynthesis. In terms of biological role, catalyzes amidations at positions B, D, E, and G on adenosylcobyrinic A,C-diamide. NH(2) groups are provided by glutamine, and one molecule of ATP is hydrogenolyzed for each amidation. In Listeria monocytogenes serovar 1/2a (strain ATCC BAA-679 / EGD-e), this protein is Cobyric acid synthase.